The sequence spans 527 residues: Arginine--tRNA ligase (527 aa).

Positions 112–122 (ANPTGPLHIGH) match the 'HIGH' region motif.

Belongs to the class-I aminoacyl-tRNA synthetase family. Monomer.

It localises to the cytoplasm. It carries out the reaction tRNA(Arg) + L-arginine + ATP = L-arginyl-tRNA(Arg) + AMP + diphosphate. In Nitratiruptor sp. (strain SB155-2), this protein is Arginine--tRNA ligase.